The following is a 489-amino-acid chain: Zinc finger protein 58 (489 aa).

One can recognise a KRAB domain in the interval Leu-2 to Pro-73. The C2H2-type 1; degenerate zinc finger occupies Asn-78–Arg-100. C2H2-type zinc fingers lie at residues Phe-106–His-128, Tyr-134–His-156, Tyr-162–His-184, Tyr-190–His-212, Tyr-218–His-240, Tyr-246–His-268, Tyr-274–His-296, Cys-302–His-324, Tyr-330–His-352, Tyr-358–His-380, Tyr-386–His-408, Tyr-410–His-432, His-438–His-460, and Tyr-466–His-488.

Belongs to the krueppel C2H2-type zinc-finger protein family. In terms of tissue distribution, expressed in liver, testis and, at considerably lower levels, in brain, spleen and heart.

The protein localises to the nucleus. Functionally, may have a role during differentiation processes. This chain is Zinc finger protein 58 (Zfp58), found in Mus musculus (Mouse).